Reading from the N-terminus, the 245-residue chain is Pyridoxine 5'-phosphate synthase (245 aa).

Asn8 and Arg19 together coordinate 3-amino-2-oxopropyl phosphate. His44 (proton acceptor) is an active-site residue. 1-deoxy-D-xylulose 5-phosphate-binding residues include Arg46 and His51. Residue Glu76 is the Proton acceptor of the active site. Thr106 is a 1-deoxy-D-xylulose 5-phosphate binding site. The active-site Proton donor is the His198. 3-amino-2-oxopropyl phosphate-binding positions include Asp199 and Gly221–His222.

It belongs to the PNP synthase family. As to quaternary structure, homooctamer; tetramer of dimers.

It localises to the cytoplasm. The catalysed reaction is 3-amino-2-oxopropyl phosphate + 1-deoxy-D-xylulose 5-phosphate = pyridoxine 5'-phosphate + phosphate + 2 H2O + H(+). It functions in the pathway cofactor biosynthesis; pyridoxine 5'-phosphate biosynthesis; pyridoxine 5'-phosphate from D-erythrose 4-phosphate: step 5/5. Its function is as follows. Catalyzes the complicated ring closure reaction between the two acyclic compounds 1-deoxy-D-xylulose-5-phosphate (DXP) and 3-amino-2-oxopropyl phosphate (1-amino-acetone-3-phosphate or AAP) to form pyridoxine 5'-phosphate (PNP) and inorganic phosphate. The chain is Pyridoxine 5'-phosphate synthase from Brucella anthropi (strain ATCC 49188 / DSM 6882 / CCUG 24695 / JCM 21032 / LMG 3331 / NBRC 15819 / NCTC 12168 / Alc 37) (Ochrobactrum anthropi).